The primary structure comprises 547 residues: Chaperonin GroEL (547 aa).

ATP-binding positions include Thr30–Pro33, Lys51, Asp87–Thr91, Gly415, Asn479–Ala481, and Asp495.

It belongs to the chaperonin (HSP60) family. Forms a cylinder of 14 subunits composed of two heptameric rings stacked back-to-back. Interacts with the co-chaperonin GroES.

Its subcellular location is the cytoplasm. The catalysed reaction is ATP + H2O + a folded polypeptide = ADP + phosphate + an unfolded polypeptide.. Together with its co-chaperonin GroES, plays an essential role in assisting protein folding. The GroEL-GroES system forms a nano-cage that allows encapsulation of the non-native substrate proteins and provides a physical environment optimized to promote and accelerate protein folding. In Cupriavidus pinatubonensis (strain JMP 134 / LMG 1197) (Cupriavidus necator (strain JMP 134)), this protein is Chaperonin GroEL.